We begin with the raw amino-acid sequence, 286 residues long: Pantothenate synthetase (286 aa).

Residue 30–37 (MGYFHEGH) participates in ATP binding. The Proton donor role is filled by His37. Position 61 (Gln61) interacts with (R)-pantoate. Gln61 is a beta-alanine binding site. 147–150 (GKKD) lines the ATP pocket. A (R)-pantoate-binding site is contributed by Gln153. An ATP-binding site is contributed by 184–187 (MSSR).

Belongs to the pantothenate synthetase family. In terms of assembly, homodimer.

Its subcellular location is the cytoplasm. It carries out the reaction (R)-pantoate + beta-alanine + ATP = (R)-pantothenate + AMP + diphosphate + H(+). It participates in cofactor biosynthesis; (R)-pantothenate biosynthesis; (R)-pantothenate from (R)-pantoate and beta-alanine: step 1/1. In terms of biological role, catalyzes the condensation of pantoate with beta-alanine in an ATP-dependent reaction via a pantoyl-adenylate intermediate. The chain is Pantothenate synthetase from Syntrophus aciditrophicus (strain SB).